We begin with the raw amino-acid sequence, 88 residues long: MANTVQARKRARQAVKQNEHNSSLRSKLRTSIKAVRKAIEAGDKAAAAKVFAATQSTIDKIADKKIAHKNTAARQKSRLSAAIKAMAA.

Residues 1–28 form a disordered region; that stretch reads MANTVQARKRARQAVKQNEHNSSLRSKL.

The protein belongs to the bacterial ribosomal protein bS20 family.

Its function is as follows. Binds directly to 16S ribosomal RNA. This is Small ribosomal subunit protein bS20 from Polynucleobacter necessarius subsp. necessarius (strain STIR1).